Consider the following 449-residue polypeptide: Phosphoglucosamine mutase (449 aa).

The Phosphoserine intermediate role is filled by S101. The Mg(2+) site is built by S101, D242, D244, and D246. Position 101 is a phosphoserine (S101).

The protein belongs to the phosphohexose mutase family. It depends on Mg(2+) as a cofactor. Activated by phosphorylation.

The enzyme catalyses alpha-D-glucosamine 1-phosphate = D-glucosamine 6-phosphate. Functionally, catalyzes the conversion of glucosamine-6-phosphate to glucosamine-1-phosphate. This Methylocella silvestris (strain DSM 15510 / CIP 108128 / LMG 27833 / NCIMB 13906 / BL2) protein is Phosphoglucosamine mutase.